We begin with the raw amino-acid sequence, 398 residues long: Phospholipase C (398 aa).

The signal sequence occupies residues 1 to 28 (MKRKIYKLLICATIATSLWAVRTTKVYA). Positions 29, 39, 84, 96, 154, 158, 164, 176, and 180 each coordinate Zn(2+). One can recognise a Zn-dependent PLC domain in the interval 29 to 278 (WDGKADGTGT…HDVSDGKDSS (250 aa)). Residues 275 to 283 (KDSSANKNV) are linker. The 115-residue stretch at 284–398 (NELVAYITTG…ISGNSTYNIK (115 aa)) folds into the PLAT domain. Positions 299, 300, 301, 321, 322, 324, 325, 326, and 365 each coordinate Ca(2+).

It depends on Ca(2+) as a cofactor. Requires Zn(2+) as cofactor.

The protein localises to the secreted. The catalysed reaction is a 1,2-diacyl-sn-glycero-3-phosphocholine + H2O = phosphocholine + a 1,2-diacyl-sn-glycerol + H(+). Its function is as follows. Bacterial hemolysins are exotoxins that attack blood cell membranes and cause cell rupture. Constitutes an essential virulence factor in gas gangrene. Binds to eukaryotic membranes where it hydrolyzes both phosphatidylcholine and sphingomyelin, causing cell rupture. The diacylglycerol produced can activate both the arachidonic acid pathway, leading to modulation of the inflammatory response cascade and thrombosis, and protein kinase C, leading to activation of eukaryotic phospholipases and further membrane damage. This chain is Phospholipase C (plc), found in Clostridium perfringens.